Reading from the N-terminus, the 179-residue chain is Cell division protein SepF (179 aa).

Positions 22-53 are disordered; it reads LPYEKRDEPVFTPVNSSQEPALPMNQPSQSVG. The segment covering 34–53 has biased composition (polar residues); sequence PVNSSQEPALPMNQPSQSVG.

This sequence belongs to the SepF family. As to quaternary structure, homodimer. Interacts with FtsZ.

The protein resides in the cytoplasm. In terms of biological role, cell division protein that is part of the divisome complex and is recruited early to the Z-ring. Probably stimulates Z-ring formation, perhaps through the cross-linking of FtsZ protofilaments. Its function overlaps with FtsA. The polypeptide is Cell division protein SepF (Streptococcus pneumoniae (strain P1031)).